The primary structure comprises 122 residues: uncharacterized protein (122 aa).

The stretch at 79–114 (VIEDVASAIKEMMESAAKDLDKIEEVIKESLEKYLR) forms a coiled coil.

This is an uncharacterized protein from Archaeoglobus fulgidus (strain ATCC 49558 / DSM 4304 / JCM 9628 / NBRC 100126 / VC-16).